Consider the following 340-residue polypeptide: Ketol-acid reductoisomerase (NADP(+)) (340 aa).

One can recognise a KARI N-terminal Rossmann domain in the interval V3–T183. Residues F26–Q29, S54, and D84–Q87 each bind NADP(+). Residue H109 is part of the active site. G135 is a binding site for NADP(+). The KARI C-terminal knotted domain occupies T184–I329. Mg(2+) contacts are provided by D192, E196, E228, and E232. S253 serves as a coordination point for substrate.

Belongs to the ketol-acid reductoisomerase family. Requires Mg(2+) as cofactor.

The catalysed reaction is (2R)-2,3-dihydroxy-3-methylbutanoate + NADP(+) = (2S)-2-acetolactate + NADPH + H(+). The enzyme catalyses (2R,3R)-2,3-dihydroxy-3-methylpentanoate + NADP(+) = (S)-2-ethyl-2-hydroxy-3-oxobutanoate + NADPH + H(+). It participates in amino-acid biosynthesis; L-isoleucine biosynthesis; L-isoleucine from 2-oxobutanoate: step 2/4. Its pathway is amino-acid biosynthesis; L-valine biosynthesis; L-valine from pyruvate: step 2/4. Its function is as follows. Involved in the biosynthesis of branched-chain amino acids (BCAA). Catalyzes an alkyl-migration followed by a ketol-acid reduction of (S)-2-acetolactate (S2AL) to yield (R)-2,3-dihydroxy-isovalerate. In the isomerase reaction, S2AL is rearranged via a Mg-dependent methyl migration to produce 3-hydroxy-3-methyl-2-ketobutyrate (HMKB). In the reductase reaction, this 2-ketoacid undergoes a metal-dependent reduction by NADPH to yield (R)-2,3-dihydroxy-isovalerate. The polypeptide is Ketol-acid reductoisomerase (NADP(+)) (Campylobacter curvus (strain 525.92)).